The chain runs to 142 residues: Small ribosomal subunit protein uS9 (142 aa).

The segment at 117–142 (KGDPRRTEHKKPGIKHARSKRQKAYR) is disordered. Basic residues predominate over residues 123–142 (TEHKKPGIKHARSKRQKAYR).

This sequence belongs to the universal ribosomal protein uS9 family.

The polypeptide is Small ribosomal subunit protein uS9 (Pyrobaculum aerophilum (strain ATCC 51768 / DSM 7523 / JCM 9630 / CIP 104966 / NBRC 100827 / IM2)).